A 248-amino-acid chain; its full sequence is UPF0173 metal-dependent hydrolase Hlac_1347 (248 aa).

This sequence belongs to the UPF0173 family.

In Halorubrum lacusprofundi (strain ATCC 49239 / DSM 5036 / JCM 8891 / ACAM 34), this protein is UPF0173 metal-dependent hydrolase Hlac_1347.